The chain runs to 235 residues: Adenosine 5'-phosphosulfate reductase (235 aa).

4 residues coordinate [4Fe-4S] cluster: cysteine 121, cysteine 122, cysteine 204, and cysteine 207. Cysteine 230 acts as the Nucleophile; cysteine thiosulfonate intermediate in catalysis.

The protein belongs to the PAPS reductase family. CysH subfamily. [4Fe-4S] cluster is required as a cofactor.

Its subcellular location is the cytoplasm. It catalyses the reaction [thioredoxin]-disulfide + sulfite + AMP + 2 H(+) = adenosine 5'-phosphosulfate + [thioredoxin]-dithiol. It functions in the pathway sulfur metabolism; hydrogen sulfide biosynthesis; sulfite from sulfate. Functionally, catalyzes the formation of sulfite from adenosine 5'-phosphosulfate (APS) using thioredoxin as an electron donor. This chain is Adenosine 5'-phosphosulfate reductase, found in Geobacillus sp. (strain WCH70).